The primary structure comprises 244 residues: Nicotinamidase 1 (244 aa).

Belongs to the isochorismatase family. As to expression, expressed in roots and stems, and at lower levels in flowers, siliques and leaves.

The enzyme catalyses nicotinamide + H2O = nicotinate + NH4(+). The protein operates within cofactor biosynthesis; nicotinate biosynthesis; nicotinate from nicotinamide: step 1/1. Its function is as follows. Catalyzes the deamidation of nicotinamide, an early step in the NAD(+) salvage pathway. Prevents the accumulation of intracellular nicotinamide, a known inhibitor of poly(ADP-ribose) polymerases (PARP enzymes). This Arabidopsis thaliana (Mouse-ear cress) protein is Nicotinamidase 1.